A 616-amino-acid polypeptide reads, in one-letter code: Chaperone protein HscA (616 aa).

It belongs to the heat shock protein 70 family.

In terms of biological role, chaperone involved in the maturation of iron-sulfur cluster-containing proteins. Has a low intrinsic ATPase activity which is markedly stimulated by HscB. Involved in the maturation of IscU. The polypeptide is Chaperone protein HscA (Salmonella agona (strain SL483)).